A 301-amino-acid chain; its full sequence is GTPase Era (301 aa).

Residues 7–175 form the Era-type G domain; that stretch reads YCGFIAIVGR…AAIVRKHLPE (169 aa). The G1 stretch occupies residues 15-22; sequence GRPNVGKS. 15–22 is a GTP binding site; sequence GRPNVGKS. Positions 41–45 are G2; it reads QTTRH. A G3 region spans residues 62–65; it reads DTPG. GTP-binding positions include 62-66 and 124-127; these read DTPGL and NKVD. Residues 124-127 form a G4 region; sequence NKVD. The tract at residues 154–156 is G5; it reads ISA. The KH type-2 domain maps to 206–283; that stretch reads LGAELPYSVT…HLELWVKVKS (78 aa).

It belongs to the TRAFAC class TrmE-Era-EngA-EngB-Septin-like GTPase superfamily. Era GTPase family. In terms of assembly, monomer.

The protein localises to the cytoplasm. The protein resides in the cell inner membrane. Its function is as follows. An essential GTPase that binds both GDP and GTP, with rapid nucleotide exchange. Plays a role in 16S rRNA processing and 30S ribosomal subunit biogenesis and possibly also in cell cycle regulation and energy metabolism. This is GTPase Era from Escherichia fergusonii (strain ATCC 35469 / DSM 13698 / CCUG 18766 / IAM 14443 / JCM 21226 / LMG 7866 / NBRC 102419 / NCTC 12128 / CDC 0568-73).